The sequence spans 1166 residues: Serine-aspartate repeat-containing protein E (1166 aa).

Positions 1–52 (MINRDNKKAITKKGMISNRLNKFSIRKYTVGTASILVGTTLIFGLGNQEAKA) are cleaved as a signal peptide. A YSIRK-G/S signaling motif motif is present at residues 23–34 (FSIRKYTVGTAS). The ligand binding A region stretch occupies residues 53–606 (AENTSTENAK…GDGTVKPEEK (554 aa)). Positions 54–230 (ENTSTENAKQ…SKEELKNNPE (177 aa)) are disordered. Basic and acidic residues predominate over residues 61–75 (AKQDDATTSDNKEVV). Low complexity predominate over residues 77–90 (ETENNSTTENNSTN). The span at 92–108 (IKKETNTDSQPEAKKES) shows a compositional bias: basic and acidic residues. Polar residues predominate over residues 118 to 129 (NNVTATTETKPQ). Positions 130–145 (NIEKENVKPSTDKTAT) are enriched in basic and acidic residues. The segment covering 166–178 (TTKPSTSEPSTSE) has biased composition (low complexity). A compositionally biased stretch (polar residues) spans 179–212 (IQTKPTTPQESTNIENSQPQPTPSKVDNQVTDAT). The span at 221–230 (SKEELKNNPE) shows a compositional bias: basic and acidic residues. CNA-B domains are found at residues 607-719 (LYKI…YKEP), 720-829 (KYNL…YKTP), and 830-940 (KYSL…EEDT). A disordered region spans residues 904–1141 (VTNTTEDDKD…TGSENNGSNN (238 aa)). Acidic residues-rich tracts occupy residues 908–918 (TEDDKDADGGE) and 935–1105 (YFEE…DSDS). The LPXTG sorting signal motif lies at 1129-1133 (LPETG). T1132 carries the post-translational modification Pentaglycyl murein peptidoglycan amidated threonine. A propeptide spans 1133-1166 (GSENNGSNNATLFGGLFAALGSLLLFGRRKKQNK) (removed by sortase).

Belongs to the serine-aspartate repeat-containing protein (SDr) family. As to quaternary structure, interacts with host complement factor H/CFAH (via C-terminus). Interacts with host complement regulator C4BPA.

The protein localises to the secreted. Its subcellular location is the cell wall. Cell surface-associated calcium-binding protein which plays an important role in adhesion and pathogenesis. Contributes to the resistance to killing by innate immune components in blood and thus attenuates bacterial clearance by interacting with host complement factor H/CFAH and modulating its activity. Inhibits also bacterial opsonization and killing by interacting with host complement regulator C4BPA and thus inhibiting classical complement pathway activation. This Staphylococcus aureus (strain Newman) protein is Serine-aspartate repeat-containing protein E (sdrE).